A 474-amino-acid polypeptide reads, in one-letter code: Phenylalanine--tRNA ligase alpha subunit (474 aa).

L-phenylalanine is bound by residues T317, 356-358, and Y396; that span reads QLE. Residue E398 coordinates Mg(2+). F421 lines the L-phenylalanine pocket.

Belongs to the class-II aminoacyl-tRNA synthetase family. Phe-tRNA synthetase alpha subunit type 2 subfamily. Tetramer of two alpha and two beta subunits. It depends on Mg(2+) as a cofactor.

The protein resides in the cytoplasm. It carries out the reaction tRNA(Phe) + L-phenylalanine + ATP = L-phenylalanyl-tRNA(Phe) + AMP + diphosphate + H(+). The sequence is that of Phenylalanine--tRNA ligase alpha subunit from Methanocorpusculum labreanum (strain ATCC 43576 / DSM 4855 / Z).